We begin with the raw amino-acid sequence, 180 residues long: MFEATTILGYRGEFDNKKFALIGGDGQVTLGNCVVKANAIKIRSLYHNQVLSGFAGSTADAFSLFDMFERILESKKGDLFKSVVDFSKEWRKDKYLRRLEAMMIVLNFDHVFILSGTGDVLEAEDNKIAAIGSGGNFALSAARALDHFAHLEPRKLVEESLKIAGDLCIYTNTNIKILEL.

Threonine 5 is a catalytic residue. Na(+) is bound by residues glycine 165, cysteine 168, and threonine 171.

It belongs to the peptidase T1B family. HslV subfamily. In terms of assembly, a double ring-shaped homohexamer of HslV is capped on each side by a ring-shaped HslU homohexamer. The assembly of the HslU/HslV complex is dependent on binding of ATP.

The protein resides in the cytoplasm. The enzyme catalyses ATP-dependent cleavage of peptide bonds with broad specificity.. With respect to regulation, allosterically activated by HslU binding. In terms of biological role, protease subunit of a proteasome-like degradation complex believed to be a general protein degrading machinery. This chain is ATP-dependent protease subunit HslV, found in Helicobacter pylori (strain J99 / ATCC 700824) (Campylobacter pylori J99).